The chain runs to 445 residues: uncharacterized protein (445 aa).

The next 8 helical transmembrane spans lie at 16–36, 52–72, 98–118, 168–188, 219–239, 243–263, 283–303, and 366–386; these read IVSL…AFLI, LLAS…GYLL, VHSL…AGGC, GLMF…LGIV, ASAL…VWLI, GWSV…GALG, LIAA…NEGS, and AAYP…VPLV. A disordered region spans residues 417 to 445; sequence AWPNGPRRPGPPGQPRRVRQGGTAITPPT.

It belongs to the major facilitator superfamily.

The protein resides in the cell membrane. This is an uncharacterized protein from Mycobacterium tuberculosis (strain CDC 1551 / Oshkosh).